Consider the following 270-residue polypeptide: Phosphatidylglycerol--prolipoprotein diacylglyceryl transferase (270 aa).

4 helical membrane passes run 19–39, 56–76, 92–112, and 116–136; these read FPVY…LWLA, LVLI…VIFE, QGGL…ILFA, and GVSF…GQAI. Position 138 (R138) interacts with a 1,2-diacyl-sn-glycero-3-phospho-(1'-sn-glycerol). The next 3 helical transmembrane spans lie at 178 to 198, 206 to 226, and 236 to 256; these read HPTF…LLAL, GELF…VEGL, and LRIA…FIIV.

Belongs to the Lgt family.

Its subcellular location is the cell membrane. It carries out the reaction L-cysteinyl-[prolipoprotein] + a 1,2-diacyl-sn-glycero-3-phospho-(1'-sn-glycerol) = an S-1,2-diacyl-sn-glyceryl-L-cysteinyl-[prolipoprotein] + sn-glycerol 1-phosphate + H(+). It participates in protein modification; lipoprotein biosynthesis (diacylglyceryl transfer). Its function is as follows. Catalyzes the transfer of the diacylglyceryl group from phosphatidylglycerol to the sulfhydryl group of the N-terminal cysteine of a prolipoprotein, the first step in the formation of mature lipoproteins. This chain is Phosphatidylglycerol--prolipoprotein diacylglyceryl transferase, found in Bacillus thuringiensis subsp. konkukian (strain 97-27).